The sequence spans 1257 residues: Liprin-alpha-2 (1257 aa).

Disordered regions lie at residues 1–29 (MMCE…DSDS), 231–265 (ASSE…DSTD), and 438–463 (EGQL…EHNK). The segment covering 16–26 (SQRGSQSSGSD) has biased composition (low complexity). Coiled coils occupy residues 29-154 (SHFE…SLRM), 185-541 (KALD…SLIE), and 643-695 (HSDA…GLNL). The residue at position 236 (Ser-236) is a Phosphoserine. A Phosphothreonine modification is found at Thr-237. The span at 238-256 (ESEHLEGMEPGQKVHEKRL) shows a compositional bias: basic and acidic residues. Position 239 is a phosphoserine (Ser-239). Ser-687 and Ser-689 each carry phosphoserine. 2 stretches are compositionally biased toward low complexity: residues 709 to 725 (TASS…HSTP) and 798 to 813 (SSLS…GLGS). Disordered regions lie at residues 709–738 (TASS…EMDR) and 790–834 (SSYH…KSSI). Ser-817 and Ser-820 each carry phosphoserine. SAM domains follow at residues 898–964 (WDGP…MVSL), 1020–1084 (NHEW…LKRL), and 1108–1177 (WSND…LLAL). The stretch at 1081–1107 (LKRLNYDRKELERRREASQHEIKDVLV) forms a coiled coil.

It belongs to the liprin family. Liprin-alpha subfamily. Forms homodimers and heterodimers with liprins-alpha and liprins-beta. Interacts with the second PTPase domain of PTPRD, PTPRF and PTPRS. Interacts with KIF1A; the interaction decreases in presence of calcium. As to expression, expressed only in brain.

It localises to the cytoplasm. It is found in the cell surface. The protein resides in the cell projection. Its subcellular location is the dendritic spine. Its function is as follows. Alters PTPRF cellular localization and induces PTPRF clustering. May regulate the disassembly of focal adhesions. May localize receptor-like tyrosine phosphatases type 2A at specific sites on the plasma membrane, possibly regulating their interaction with the extracellular environment and their association with substrates. In neuronal cells, is a scaffolding protein in the dendritic spines which acts as immobile postsynaptic post able to recruit KIF1A-driven dense core vesicles to dendritic spines. The chain is Liprin-alpha-2 (PPFIA2) from Homo sapiens (Human).